The sequence spans 197 residues: Imidazoleglycerol-phosphate dehydratase (197 aa).

This sequence belongs to the imidazoleglycerol-phosphate dehydratase family.

The protein localises to the cytoplasm. The catalysed reaction is D-erythro-1-(imidazol-4-yl)glycerol 3-phosphate = 3-(imidazol-4-yl)-2-oxopropyl phosphate + H2O. The protein operates within amino-acid biosynthesis; L-histidine biosynthesis; L-histidine from 5-phospho-alpha-D-ribose 1-diphosphate: step 6/9. This is Imidazoleglycerol-phosphate dehydratase from Clostridium acetobutylicum (strain ATCC 824 / DSM 792 / JCM 1419 / IAM 19013 / LMG 5710 / NBRC 13948 / NRRL B-527 / VKM B-1787 / 2291 / W).